The sequence spans 218 residues: GEM-like protein 6 (218 aa).

In terms of domain architecture, GRAM spans 96–174 (KIYKRLFKVC…CKINGVNQSQ (79 aa)).

The protein belongs to the GEM family.

The sequence is that of GEM-like protein 6 from Arabidopsis thaliana (Mouse-ear cress).